The primary structure comprises 474 residues: Aspartyl/glutamyl-tRNA(Asn/Gln) amidotransferase subunit B (474 aa).

It belongs to the GatB/GatE family. GatB subfamily. Heterotrimer of A, B and C subunits.

The catalysed reaction is L-glutamyl-tRNA(Gln) + L-glutamine + ATP + H2O = L-glutaminyl-tRNA(Gln) + L-glutamate + ADP + phosphate + H(+). It catalyses the reaction L-aspartyl-tRNA(Asn) + L-glutamine + ATP + H2O = L-asparaginyl-tRNA(Asn) + L-glutamate + ADP + phosphate + 2 H(+). Functionally, allows the formation of correctly charged Asn-tRNA(Asn) or Gln-tRNA(Gln) through the transamidation of misacylated Asp-tRNA(Asn) or Glu-tRNA(Gln) in organisms which lack either or both of asparaginyl-tRNA or glutaminyl-tRNA synthetases. The reaction takes place in the presence of glutamine and ATP through an activated phospho-Asp-tRNA(Asn) or phospho-Glu-tRNA(Gln). In Limosilactobacillus reuteri (strain DSM 20016) (Lactobacillus reuteri), this protein is Aspartyl/glutamyl-tRNA(Asn/Gln) amidotransferase subunit B.